A 435-amino-acid chain; its full sequence is GTPase Der (435 aa).

2 EngA-type G domains span residues 4 to 167 (PTLA…PSED) and 175 to 350 (IKFS…ENQT). GTP is bound by residues 10–17 (GRPNVGKS), 57–61 (DTGGI), 119–122 (NKVD), 181–188 (GRPNVGKS), 228–232 (DTAGI), and 293–296 (NKWD). The KH-like domain maps to 351–435 (RRIQSSVLND…PIHIIARKRK (85 aa)).

Belongs to the TRAFAC class TrmE-Era-EngA-EngB-Septin-like GTPase superfamily. EngA (Der) GTPase family. In terms of assembly, associates with the 50S ribosomal subunit.

GTPase that plays an essential role in the late steps of ribosome biogenesis. This Lacticaseibacillus paracasei (strain ATCC 334 / BCRC 17002 / CCUG 31169 / CIP 107868 / KCTC 3260 / NRRL B-441) (Lactobacillus paracasei) protein is GTPase Der.